The sequence spans 450 residues: Phosphoglucosamine mutase (450 aa).

The active-site Phosphoserine intermediate is Ser-102. Mg(2+)-binding residues include Ser-102, Asp-243, Asp-245, and Asp-247. Ser-102 is modified (phosphoserine).

The protein belongs to the phosphohexose mutase family. Requires Mg(2+) as cofactor. In terms of processing, activated by phosphorylation.

The catalysed reaction is alpha-D-glucosamine 1-phosphate = D-glucosamine 6-phosphate. Functionally, catalyzes the conversion of glucosamine-6-phosphate to glucosamine-1-phosphate. This Agrobacterium fabrum (strain C58 / ATCC 33970) (Agrobacterium tumefaciens (strain C58)) protein is Phosphoglucosamine mutase.